Here is a 458-residue protein sequence, read N- to C-terminus: tRNA modification GTPase MnmE (458 aa).

The (6S)-5-formyl-5,6,7,8-tetrahydrofolate site is built by Arg32, Glu89, and Lys128. Residues 224 to 381 (GVRVVLAGRP…LCQRLKECAG (158 aa)) form the TrmE-type G domain. Asn234 contacts K(+). GTP contacts are provided by residues 234 to 239 (NVGKSS), 253 to 259 (TDVPGTT), and 278 to 281 (DTAG). A Mg(2+)-binding site is contributed by Ser238. The K(+) site is built by Thr253, Val255, and Thr258. A Mg(2+)-binding site is contributed by Thr259. Lys458 is a binding site for (6S)-5-formyl-5,6,7,8-tetrahydrofolate.

This sequence belongs to the TRAFAC class TrmE-Era-EngA-EngB-Septin-like GTPase superfamily. TrmE GTPase family. As to quaternary structure, homodimer. Heterotetramer of two MnmE and two MnmG subunits. The cofactor is K(+).

The protein resides in the cytoplasm. Its function is as follows. Exhibits a very high intrinsic GTPase hydrolysis rate. Involved in the addition of a carboxymethylaminomethyl (cmnm) group at the wobble position (U34) of certain tRNAs, forming tRNA-cmnm(5)s(2)U34. The polypeptide is tRNA modification GTPase MnmE (Nitrosococcus oceani (strain ATCC 19707 / BCRC 17464 / JCM 30415 / NCIMB 11848 / C-107)).